Here is a 465-residue protein sequence, read N- to C-terminus: MIVPSLEELNSFKYSDLQNLAKSLGLRANLRADKLLRALKAHLKNEARKENENQDEIQTSASSCDEPEIQTSSQEQAEREPDDHVTKTRGRRKTVHRSPDSQANGNVQTEKKLPPVPNLQNHSEIKLCGPTKSQNQEKHENQVLRTAVEVPSLPNESQGDENTVSSGKHGIDGNEDPRVPSKRKKSLYTDGFSKPGKNKTASTTPNFKKLHEARFKEMESIDQYVERKKKHFEEHNSFNELKVLQRQPVTKGVPATPVPARGRLSVACTPGSQRRSQGRPHAGRSTLCVKGSAKRSALSAAKMNVRFSAATKDNEHKRSLTKTPARKSPHVTTSVNTPKGQAVLGTHKLKTTRGESVAVITPFKLTTEASQTPISHKKPVFDLKASLSRPLNYEPHKGKLKPWGQSKENNSLHEHVNRVSFHKKTYKQPRLQTREEQRKKHERERKEKKEKVLGVRRGLIIAERS.

Residues 32–61 (ADKLLRALKAHLKNEARKENENQDEIQTSA) adopt a coiled-coil conformation. 3 disordered regions span residues 44–123 (KNEA…QNHS), 148–207 (VEVP…TPNF), and 252–294 (GVPA…GSAK). Positions 56-75 (EIQTSASSCDEPEIQTSSQE) are enriched in polar residues. Over residues 76–86 (QAEREPDDHVT) the composition is skewed to basic and acidic residues. Basic residues predominate over residues 87–96 (KTRGRRKTVH). Ser-152 carries the phosphoserine modification. The span at 154 to 166 (PNESQGDENTVSS) shows a compositional bias: polar residues. Residues 169 to 179 (HGIDGNEDPRV) show a composition bias toward basic and acidic residues. Thr-204 is modified (phosphothreonine). The interaction with microtubules stretch occupies residues 262-405 (GRLSVACTPG…HKGKLKPWGQ (144 aa)). At Ser-265 the chain carries Phosphoserine. The residue at position 269 (Thr-269) is a Phosphothreonine. Phosphoserine is present on residues Ser-272, Ser-292, Ser-299, and Ser-334. Residues 308-338 (SAATKDNEHKRSLTKTPARKSPHVTTSVNTP) form a disordered region. Phosphothreonine occurs at positions 337, 361, and 372. Ser-375 and Ser-386 each carry phosphoserine. The disordered stretch occupies residues 396–454 (HKGKLKPWGQSKENNSLHEHVNRVSFHKKTYKQPRLQTREEQRKKHERERKEKKEKVLG). The KEN box signature appears at 407 to 413 (KENNSLH). Positions 430-457 (RLQTREEQRKKHERERKEKKEKVLGVRR) form a coiled coil. Over residues 432-453 (QTREEQRKKHERERKEKKEKVL) the composition is skewed to basic and acidic residues.

The protein belongs to the NUSAP family. Interacts with DNA and microtubules. Microtubule bundling is inhibited by IPO7, KPNA2 and KPNB1 while association with DNA is also inhibited by IPO7 and KPNA2. Ubiquitinated. Ubiquitination by FZR1 may lead to proteasome-dependent degradation of this protein.

It localises to the cytoplasm. Its subcellular location is the nucleus. The protein localises to the nucleolus. The protein resides in the cytoskeleton. It is found in the spindle. It localises to the chromosome. In terms of biological role, microtubule-associated protein with the capacity to bundle and stabilize microtubules. May associate with chromosomes and promote the organization of mitotic spindle microtubules around them. This chain is Nucleolar and spindle-associated protein 1 (NUSAP1), found in Bos taurus (Bovine).